Consider the following 339-residue polypeptide: Dihydroorotase (339 aa).

Residues H12 and H14 each coordinate Zn(2+). Substrate is bound by residues 14–16 (HVR) and N40. Residues K94, H133, H167, and D239 each coordinate Zn(2+). An N6-carboxylysine modification is found at K94. Position 133 (H133) interacts with substrate. D239 is a catalytic residue. Residues H243 and A255 each coordinate substrate.

The protein belongs to the metallo-dependent hydrolases superfamily. DHOase family. Class II DHOase subfamily. Homodimer. Zn(2+) is required as a cofactor.

The catalysed reaction is (S)-dihydroorotate + H2O = N-carbamoyl-L-aspartate + H(+). The protein operates within pyrimidine metabolism; UMP biosynthesis via de novo pathway; (S)-dihydroorotate from bicarbonate: step 3/3. In terms of biological role, catalyzes the reversible cyclization of carbamoyl aspartate to dihydroorotate. This Helicobacter pylori (strain G27) protein is Dihydroorotase.